The following is a 129-amino-acid chain: MEAKEKKYGEIEIEKAQLEAWPNPNPERDYMIEITFPEFTCLCPRSGYPDFATIKIRYIPDKYIVELKSLKLWLNKFRNRYISHEAATNEIYQALYDLLKPRFLEVVGDFHPRGNVHTVVRVRSDENYG.

C43 (thioimide intermediate) is an active-site residue. Residue D50 is the Proton donor of the active site. Residues 65 to 67 and 84 to 85 each bind substrate; these read VEL and HE.

The protein belongs to the GTP cyclohydrolase I family. QueF type 1 subfamily.

It is found in the cytoplasm. The catalysed reaction is 7-aminomethyl-7-carbaguanine + 2 NADP(+) = 7-cyano-7-deazaguanine + 2 NADPH + 3 H(+). It functions in the pathway tRNA modification; tRNA-queuosine biosynthesis. Functionally, catalyzes the NADPH-dependent reduction of 7-cyano-7-deazaguanine (preQ0) to 7-aminomethyl-7-deazaguanine (preQ1). This chain is NADPH-dependent 7-cyano-7-deazaguanine reductase, found in Aquifex aeolicus (strain VF5).